A 309-amino-acid polypeptide reads, in one-letter code: Isoflavone reductase homolog IRL (309 aa).

NADP(+) is bound by residues 12 to 18 (GGTGYLG), Arg-37, and Lys-46. Lys-134 serves as the catalytic Proton acceptor. An NADP(+)-binding site is contributed by Arg-138.

Belongs to the NmrA-type oxidoreductase family. Isoflavone reductase subfamily. As to quaternary structure, monomer.

It is found in the cytoplasm. It participates in alkaloid biosynthesis. Its function is as follows. Reductase that may be involved in a late step of alkaloid biosynthesis. The polypeptide is Isoflavone reductase homolog IRL (Zea mays (Maize)).